The following is a 463-amino-acid chain: Cysteine--tRNA ligase (463 aa).

Residue Cys29 participates in Zn(2+) binding. The 'HIGH' region motif lies at 31–41 (PTVYDFAHIGN). The Zn(2+) site is built by Cys227, His252, and Glu256. Positions 285 to 289 (KMSKS) match the 'KMSKS' region motif. Lys288 is a binding site for ATP.

It belongs to the class-I aminoacyl-tRNA synthetase family. As to quaternary structure, monomer. Zn(2+) serves as cofactor.

It is found in the cytoplasm. The catalysed reaction is tRNA(Cys) + L-cysteine + ATP = L-cysteinyl-tRNA(Cys) + AMP + diphosphate. The chain is Cysteine--tRNA ligase from Rhodopseudomonas palustris (strain BisA53).